The chain runs to 142 residues: Mitochondrial import receptor subunit TOM22 homolog (142 aa).

Over residues 1-11 the composition is skewed to low complexity; it reads MAAAVAAAGAG. Residues 1–42 form a disordered region; the sequence is MAAAVAAAGAGEPQSPDELLPKGDAEKPEEELEEDDDEELDE. At Ala-2 the chain carries N-acetylalanine. At 2 to 83 the chain is on the cytoplasmic side; sequence AAAVAAAGAG…AQKMYRFSRA (82 aa). Ser-15 bears the Phosphoserine mark. Positions 27-42 are enriched in acidic residues; the sequence is KPEEELEEDDDEELDE. The interval 41-50 is import sequence; necessary for mitochondrion outer membrane localization and integration in the TOM complex; sequence DETLSERLWG. Thr-43 is subject to Phosphothreonine. Position 45 is a phosphoserine (Ser-45). Residues 83 to 103 form a TMD; necessary for mitochondrion outer membrane localization and integration in the TOM complex region; that stretch reads AALWIGTTSFMILVLPVVFET. The chain crosses the membrane as a helical span at residues 84–103; it reads ALWIGTTSFMILVLPVVFET. The Mitochondrial intermembrane portion of the chain corresponds to 104 to 142; it reads EKLQMEQQQQLQQRQILLGPNTGLSGGMPGALPSLPGKI. The segment at 123–142 is C-tail signal; necessary for mitochondrion outer membrane localization and integration in the TOM complex; it reads PNTGLSGGMPGALPSLPGKI.

It belongs to the Tom22 family. In terms of assembly, forms part of the preprotein translocase complex of the outer mitochondrial membrane (TOM complex) which consists of at least 7 different proteins (TOMM5, TOMM6, TOMM7, TOMM20, TOMM22, TOMM40 and TOMM70). Interacts with TOMM40. Interacts with PPP2R2B. In terms of tissue distribution, ubiquitous.

Its subcellular location is the mitochondrion outer membrane. In terms of biological role, central receptor component of the translocase of the outer membrane of mitochondria (TOM complex) responsible for the recognition and translocation of cytosolically synthesized mitochondrial preproteins. Together with the peripheral receptor TOM20 functions as the transit peptide receptor and facilitates the movement of preproteins into the translocation pore. Required for the translocation across the mitochondrial outer membrane of cytochrome P450 monooxygenases. The polypeptide is Mitochondrial import receptor subunit TOM22 homolog (TOMM22) (Homo sapiens (Human)).